A 987-amino-acid polypeptide reads, in one-letter code: MPMDKTFNAAEAEARLYDAWEKAGAFRAGANASRPETFCIMIPPPNVTGSLHMGHAFNNTLQDILTRWHRMRGFDTLWQPGQDHAGIATQMVVERELARAGNPGRREMGREAFLEKVWEWKEQSGGTIVNQLKRLGASCDWSRNAFTMDPNFQRAVLKVFVDLYEKGFIYRGKRLVNWDPHFETAISDLEVEQVEVNGNMWRLRYQLADGATYRHPVAFDEEGRPTEWEERDYLTVATTRPETMLGDTGIAVNPSDERYAHLIGKEVVLPLVGRRIPIVADDYADPSKGTGAVKITPAHDFNDWGVGQRTGLRAINVMSGRATMFLIENPDFTEGCAPSEEALALDGLDRYEARKRVVALAEEQGWLDGIDQDRHMVPHGDRSKVAIEPMLTDQWFVDTAQIVQPAIDAVRTGRTEILPERDAKTYFHWLENIEPWCISRQLWWGHQIPVWYGLDIWPARFEDDGDDTLDEVEIFELLEDGAFNHADPTHHCAFDFEGVSEKFLDDLASLPHPLNNARVVEVASRAEAIDRLAQALADYNLNEDPTHLVYPVWRDPDVLDTWFSSGLWPIGTLGWPEETPELARYFPTNVLITGFDIIFFWVARMMMMQLAVVNEVPFKTVYVHALVRDEKGKKMSKSLGNVLDPLELIDEFGADAVRFTLTAMAAMGRDLKLSTARIQGYRNFGTKLWNACRFAEMNGVWEGHGTQAAPPAATATVNRWIIGETGRVREEVDAALAAYRFDSAANALYAFVWGKVCDWYVEFSKPLFDTEAAAETRATMGWVLDQCMVLLHPIMPFITEDLWATTGSRTKMLVHTDWPSFGAELVDPAADREMSWVISLIEEIRSARAQVHVPAGLKLPVVQLALDAAGREALARNEALILRLARLEGFTEAASAPKGALTIAVEGGSFAIPLEGVIDIGAEKARLAKTLEKLEKDMAGLRGRLGNPNFVASAPEEVVDEARTRLEQGEEEGAKLSAALARLSEIA.

Residues 45-55 (PNVTGSLHMGH) carry the 'HIGH' region motif. A 'KMSKS' region motif is present at residues 634–638 (KMSKS). Lys637 serves as a coordination point for ATP. The stretch at 917–985 (VIDIGAEKAR…LSAALARLSE (69 aa)) forms a coiled coil.

The protein belongs to the class-I aminoacyl-tRNA synthetase family. ValS type 1 subfamily. As to quaternary structure, monomer.

It localises to the cytoplasm. It carries out the reaction tRNA(Val) + L-valine + ATP = L-valyl-tRNA(Val) + AMP + diphosphate. Its function is as follows. Catalyzes the attachment of valine to tRNA(Val). As ValRS can inadvertently accommodate and process structurally similar amino acids such as threonine, to avoid such errors, it has a 'posttransfer' editing activity that hydrolyzes mischarged Thr-tRNA(Val) in a tRNA-dependent manner. This Cereibacter sphaeroides (strain ATCC 17029 / ATH 2.4.9) (Rhodobacter sphaeroides) protein is Valine--tRNA ligase.